The following is a 721-amino-acid chain: Oviduct-specific glycoprotein (721 aa).

An N-terminal signal peptide occupies residues Met1 to Ala21. The GH18 domain maps to Tyr22–Thr385. Residues Cys26 and Cys51 are joined by a disulfide bond. Chitin-binding positions include Leu71–Gln72, Gly98–Asn101, Tyr142, Leu211–Asp214, and Trp355. N-linked (GlcNAc...) asparagine glycosylation is found at Asn402 and Asn442. A compositionally biased stretch (polar residues) spans Thr444–Gly456. The disordered stretch occupies residues Thr444 to Val465. N-linked (GlcNAc...) asparagine glycosylation is present at Asn469. Tandem repeats lie at residues Ser486 to Val492, Ser493 to Ile499, Ser500 to Val506, Ser507 to Val513, Ser514 to Ile520, Ser521 to Ile527, Ser528 to Val534, Ser535 to Val541, Ser542 to Ile548, Ser549 to Val555, Ser556 to Ile562, Ser563 to Ile569, Ser570 to Val576, Ser577 to Val583, Ser584 to Ile590, Ser591 to Ile597, Ser598 to Ile604, Ser605 to Ile611, Ser612 to Ile618, Ser619 to Ile625, and Ser626 to Met632. The segment at Ser486 to Met632 is 21 X 7 AA tandem repeats of S-K-[TAI]-[TI]-[TAP]-[GED]-[IVM].

This sequence belongs to the glycosyl hydrolase 18 family. As to expression, epithelial cells of the oviduct.

The protein localises to the cytoplasmic vesicle. It localises to the secretory vesicle. Its function is as follows. Binds to oocyte zona pellucida in vivo. May play a role in the fertilization process and/or early embryonic development. The sequence is that of Oviduct-specific glycoprotein (Ovgp1) from Mus musculus (Mouse).